The primary structure comprises 360 residues: UPF0284 protein APE_2029.1 (360 aa).

This sequence belongs to the UPF0284 family.

The polypeptide is UPF0284 protein APE_2029.1 (Aeropyrum pernix (strain ATCC 700893 / DSM 11879 / JCM 9820 / NBRC 100138 / K1)).